A 485-amino-acid chain; its full sequence is Glutamyl-tRNA(Gln) amidotransferase subunit A (485 aa).

Active-site charge relay system residues include lysine 76 and serine 151. The active-site Acyl-ester intermediate is the serine 175.

Belongs to the amidase family. GatA subfamily. Heterotrimer of A, B and C subunits.

The catalysed reaction is L-glutamyl-tRNA(Gln) + L-glutamine + ATP + H2O = L-glutaminyl-tRNA(Gln) + L-glutamate + ADP + phosphate + H(+). In terms of biological role, allows the formation of correctly charged Gln-tRNA(Gln) through the transamidation of misacylated Glu-tRNA(Gln) in organisms which lack glutaminyl-tRNA synthetase. The reaction takes place in the presence of glutamine and ATP through an activated gamma-phospho-Glu-tRNA(Gln). The polypeptide is Glutamyl-tRNA(Gln) amidotransferase subunit A (Pelagibacter ubique (strain HTCC1062)).